Consider the following 96-residue polypeptide: Large ribosomal subunit protein eL21 (96 aa).

The protein belongs to the eukaryotic ribosomal protein eL21 family.

The protein is Large ribosomal subunit protein eL21 of Methanoregula boonei (strain DSM 21154 / JCM 14090 / 6A8).